The chain runs to 154 residues: MFHVSFRYIFGIPPLILVLLPVTSSDCHIKDKDGKAFGSVLMISINQLDKMTGTDSDCPNNEPNFFKKHLCDDTKEAAFLNRAARKLRQFLKMNISEEFNDHLLRVSDGTQTLVNCTSKEEKTIKEQKKNDPCFLKRLLREIKTCWNKILKGSI.

A signal peptide spans 1–25 (MFHVSFRYIFGIPPLILVLLPVTSS). 3 disulfides stabilise this stretch: cysteine 27-cysteine 145, cysteine 58-cysteine 133, and cysteine 71-cysteine 116. Residues asparagine 94 and asparagine 115 are each glycosylated (N-linked (GlcNAc...) asparagine).

This sequence belongs to the IL-7/IL-9 family. In terms of assembly, interacts with IL7R and CSF2RG. Three disulfide bonds are present.

It localises to the secreted. Its function is as follows. Hematopoietic cytokine that plays an essential role in the development, expansion, and survival of naive and memory T-cells and B-cells thereby regulating the number of mature lymphocytes and maintaining lymphoid homeostasis. Mechanistically, exerts its biological effects through a receptor composed of IL7RA subunit and the cytokine receptor common subunit gamma/CSF2RG. Binding to the receptor leads to activation of various kinases including JAK1 or JAK3 depending on the cell type and subsequently propagation of signals through activation of several downstream signaling pathways including the PI3K/Akt/mTOR or the JAK-STAT5. The protein is Interleukin-7 (Il7) of Rattus norvegicus (Rat).